The chain runs to 684 residues: PAN2-PAN3 deadenylation complex subunit PAN3 (684 aa).

Disordered stretches follow at residues 1–38 (MLPP…RETA), 68–97 (DPST…PARE), and 112–146 (VPKG…STGL). Basic and acidic residues predominate over residues 21 to 38 (EKAKEKEKKHSPEKRETA). The C3H1-type zinc finger occupies 36–65 (ETAQRICRNVMIYGYCKYQDQGCIYYHPPA). The span at 127-139 (VPTPSAPTPPVWP) shows a compositional bias: pro residues. Residues 263–544 (GANGASAPGL…SIDEVVKMMG (282 aa)) are pseudokinase domain. Residues Arg-326 and 375–382 (DYHPLSTT) each bind ATP. The segment at 387-412 (YLSPNPPEPSPASALANQPPKRRSSP) is disordered. Residue 444 to 445 (SK) coordinates ATP. The stretch at 545-583 (PRILNELDAVQSYADVLENELGAEVENGRIVRLLTKLGF) forms a coiled coil. Residues 584–684 (INERAEFELD…NAGNNHRVHR (101 aa)) are knob domain.

It belongs to the protein kinase superfamily. PAN3 family. Homodimer. Forms a heterotrimer with a catalytic subunit PAN2 to form the poly(A)-nuclease (PAN) deadenylation complex. Interacts (via PAM-2 motif) with poly(A)-binding protein PAB1 (via PABC domain), conferring substrate specificity of the enzyme complex.

The protein localises to the cytoplasm. In terms of biological role, regulatory subunit of the poly(A)-nuclease (PAN) deadenylation complex, one of two cytoplasmic mRNA deadenylases involved in mRNA turnover. PAN specifically shortens poly(A) tails of RNA and the activity is stimulated by poly(A)-binding protein PAB1. PAN deadenylation is followed by rapid degradation of the shortened mRNA tails by the CCR4-NOT complex. Deadenylated mRNAs are then degraded by two alternative mechanisms, namely exosome-mediated 3'-5' exonucleolytic degradation, or deadenylation-dependent mRNA decaping and subsequent 5'-3' exonucleolytic degradation by XRN1. May also be involved in post-transcriptional maturation of mRNA poly(A) tails. PAN3 acts as a positive regulator for PAN activity, recruiting the catalytic subunit PAN2 to mRNA via its interaction with RNA and with PAB1. This chain is PAN2-PAN3 deadenylation complex subunit PAN3, found in Cryptococcus neoformans var. neoformans serotype D (strain B-3501A) (Filobasidiella neoformans).